A 267-amino-acid polypeptide reads, in one-letter code: Kafirin PSK8 (267 aa).

A signal peptide spans 1-19; sequence TKIFALLALHALLVSGTTA.

This sequence belongs to the zein family.

Major seed storage prolamin. This is Kafirin PSK8 from Sorghum bicolor (Sorghum).